The sequence spans 213 residues: Dimethylamine corrinoid protein 1 (213 aa).

In terms of domain architecture, B12-binding N-terminal spans 1 to 90; it reads MSKEELLQEL…LMPEGSASSK (90 aa). The B12-binding domain maps to 91-213; sequence MGVIVNGTVE…AVAKAKELLA (123 aa). Histidine 104 provides a ligand contact to methylcob(III)alamin.

Belongs to the methylamine corrinoid protein family.

It participates in one-carbon metabolism; methanogenesis from dimethylamine. Acts as a methyl group carrier between MtbB and MtbA. This is Dimethylamine corrinoid protein 1 (mtbC1) from Methanosarcina acetivorans (strain ATCC 35395 / DSM 2834 / JCM 12185 / C2A).